The sequence spans 204 residues: ATP-dependent Clp protease proteolytic subunit (204 aa).

S102 functions as the Nucleophile in the catalytic mechanism. Residue H127 is part of the active site.

The protein belongs to the peptidase S14 family. In terms of assembly, fourteen ClpP subunits assemble into 2 heptameric rings which stack back to back to give a disk-like structure with a central cavity, resembling the structure of eukaryotic proteasomes.

The protein resides in the cytoplasm. The enzyme catalyses Hydrolysis of proteins to small peptides in the presence of ATP and magnesium. alpha-casein is the usual test substrate. In the absence of ATP, only oligopeptides shorter than five residues are hydrolyzed (such as succinyl-Leu-Tyr-|-NHMec, and Leu-Tyr-Leu-|-Tyr-Trp, in which cleavage of the -Tyr-|-Leu- and -Tyr-|-Trp bonds also occurs).. In terms of biological role, cleaves peptides in various proteins in a process that requires ATP hydrolysis. Has a chymotrypsin-like activity. Plays a major role in the degradation of misfolded proteins. In Neisseria meningitidis serogroup C (strain 053442), this protein is ATP-dependent Clp protease proteolytic subunit.